Consider the following 470-residue polypeptide: 3-isopropylmalate dehydratase large subunit (470 aa).

[4Fe-4S] cluster-binding residues include Cys-349, Cys-409, and Cys-412.

Belongs to the aconitase/IPM isomerase family. LeuC type 1 subfamily. In terms of assembly, heterodimer of LeuC and LeuD. Requires [4Fe-4S] cluster as cofactor.

It carries out the reaction (2R,3S)-3-isopropylmalate = (2S)-2-isopropylmalate. It functions in the pathway amino-acid biosynthesis; L-leucine biosynthesis; L-leucine from 3-methyl-2-oxobutanoate: step 2/4. Catalyzes the isomerization between 2-isopropylmalate and 3-isopropylmalate, via the formation of 2-isopropylmaleate. The sequence is that of 3-isopropylmalate dehydratase large subunit from Campylobacter jejuni subsp. jejuni serotype O:2 (strain ATCC 700819 / NCTC 11168).